The chain runs to 394 residues: Phosphoglycerate kinase (394 aa).

Substrate is bound by residues 21–23 (DLN), arginine 37, 60–63 (HLGR), arginine 115, and arginine 148. ATP is bound by residues lysine 199, glutamate 321, and 347–350 (GGDT).

Belongs to the phosphoglycerate kinase family. In terms of assembly, monomer.

Its subcellular location is the cytoplasm. It catalyses the reaction (2R)-3-phosphoglycerate + ATP = (2R)-3-phospho-glyceroyl phosphate + ADP. Its pathway is carbohydrate degradation; glycolysis; pyruvate from D-glyceraldehyde 3-phosphate: step 2/5. This Azoarcus sp. (strain BH72) protein is Phosphoglycerate kinase.